Here is a 587-residue protein sequence, read N- to C-terminus: Ran GTPase-activating protein 1 (587 aa).

The residue at position 2 (A2) is an N-acetylalanine. K8 is covalently cross-linked (Glycyl lysine isopeptide (Lys-Gly) (interchain with G-Cter in SUMO1); alternate). Residue K8 forms a Glycyl lysine isopeptide (Lys-Gly) (interchain with G-Cter in SUMO2); alternate linkage. K15 participates in a covalent cross-link: Glycyl lysine isopeptide (Lys-Gly) (interchain with G-Cter in SUMO2). Phosphoserine is present on S24. 4 LRR repeats span residues 48-71 (FDSL…VIAK), 111-134 (GAQL…GFEA), 207-230 (IGTL…ALAQ), and 235-258 (NPLL…AMAE). Residue K279 forms a Glycyl lysine isopeptide (Lys-Gly) (interchain with G-Cter in SUMO2) linkage. 2 LRR repeats span residues 292–319 (LPKL…AMAD) and 320–343 (KAEL…QLQE). S301 is modified (phosphoserine). The tract at residues 357–430 (LSDDEDEEEE…EPAPVLSSPP (74 aa)) is disordered. A Phosphoserine modification is found at S358. Residues 358-397 (SDDEDEEEEEEGEEEEEEAEEEEEEDEEEEEEEEEEEEEE) are compositionally biased toward acidic residues. Residues 400–410 (QRGQGEKSATP) show a composition bias toward polar residues. Residue T409 is modified to Phosphothreonine; by CDK2. Phosphoserine is present on residues S428 and S435. T436 carries the phosphothreonine modification. S442 bears the Phosphoserine mark. K452 participates in a covalent cross-link: Glycyl lysine isopeptide (Lys-Gly) (interchain with G-Cter in SUMO2). Positions 523 to 526 (LKSE) match the SUMO conjugation motif. A Glycyl lysine isopeptide (Lys-Gly) (interchain with G-Cter in SUMO1); alternate cross-link involves residue K524. Residue K524 forms a Glycyl lysine isopeptide (Lys-Gly) (interchain with G-Cter in SUMO2); alternate linkage. N6-acetyllysine; alternate is present on K524. K586 participates in a covalent cross-link: Glycyl lysine isopeptide (Lys-Gly) (interchain with G-Cter in SUMO2).

Belongs to the RNA1 family. In terms of assembly, homodimer. Interacts with RAN. Forms a complex with RANBP2/NUP358, NXF1 and NXT1. Forms a tight complex in association with RANBP2/NUP358 and UBE2I/UBC9, the ubiquitin-conjugating enzyme E2. Interacts with UBE2I; the interaction conjugates SUMO1 to RANGAP1, and subsequently stabilizes interactions of sumoylated RANGAP1 with RANBP2/NUP358. The complex composed of RANBP2, SUMO1, RANGAP1 and UBE2I associates with nuclear pore complexes. Identified in a complex composed of RAN, RANBP2, sumoylated RANGAP1, UBE2I and XPO1. Identified in a complex composed of RAN, RANGAP1 and RANBP1. Interacts with TRAF6. Interacts with SUMO1 and SENP1. Interacts (when sumoylated) with MYCBP2; interaction inhibits MYCBP2 E3 ubiquitin-protein ligase activity and promotes MYCBP2 translocation to the nucleus. Phosphorylation occurs before nuclear envelope breakdown and continues throughout mitosis. Phosphorylated by the M-phase kinase cyclin B/Cdk1, in vitro. Differential timimg of dephosphorylation occurs during phases of mitosis. The phosphorylated form remains associated with RANBP2/NUP358 and the SUMO E2-conjugating enzyme, UBE2I, on nuclear pore complex (NPC) diassembly and during mitosis. In terms of processing, sumoylated. Sumoylation is necessary for targeting to the nuclear envelope (NE), and for association with mitotic spindles and kinetochores during mitosis. Also required for interaction with RANBP2 and is mediated by UBE2I. Desumoylated by HINT1. As to expression, highly expressed in brain, thymus and testis.

It is found in the cytoplasm. The protein localises to the nucleus. The protein resides in the nucleoplasm. Its subcellular location is the nucleus envelope. It localises to the chromosome. It is found in the centromere. The protein localises to the kinetochore. The protein resides in the cytoskeleton. Its subcellular location is the spindle. Functionally, GTPase activator for RAN. Converts cytoplasmic GTP-bound RAN to GDP-bound RAN, which is essential for RAN-mediated nuclear import and export. Mediates dissociation of cargo from nuclear export complexes containing XPO1, RAN and RANBP2 after nuclear export. This is Ran GTPase-activating protein 1 (RANGAP1) from Homo sapiens (Human).